The sequence spans 209 residues: Outer-membrane lipoprotein LolB (209 aa).

A signal peptide spans 1 to 17; that stretch reads MATVFSRALGALVLGVA. The N-palmitoyl cysteine moiety is linked to residue Cys-18. The S-diacylglycerol cysteine moiety is linked to residue Cys-18.

It belongs to the LolB family. Monomer.

It localises to the cell outer membrane. In terms of biological role, plays a critical role in the incorporation of lipoproteins in the outer membrane after they are released by the LolA protein. The polypeptide is Outer-membrane lipoprotein LolB (Ralstonia nicotianae (strain ATCC BAA-1114 / GMI1000) (Ralstonia solanacearum)).